A 1116-amino-acid chain; its full sequence is cGMP-specific 3',5'-cyclic phosphodiesterase (1116 aa).

2 disordered regions span residues 1 to 36 (MTDV…NGAA) and 82 to 136 (KSEC…ATQQ). Residues 15–28 (VSSTSSEVAVETTS) are compositionally biased toward low complexity. Residues 86–136 (HSQSNNNQHVETAPSKQSSDSEASAPTTVSIPSANAKINSSSSGKTTATQQ) show a composition bias toward polar residues. GAF domains are found at residues 241-393 (DIDV…GIGI) and 425-611 (NLEC…GLGI). The PDEase domain maps to 641–964 (SQDQTEKLAQ…RNWQDLAEKV (324 aa)). Residue His-717 is the Proton donor of the active site. A divalent metal cation is bound by residues His-721, His-757, Asp-758, and Asp-868. Disordered stretches follow at residues 1005–1031 (QHGG…LSIK) and 1067–1116 (HVSE…CALL). 2 stretches are compositionally biased toward basic and acidic residues: residues 1014–1023 (EDTHTPEHQR) and 1067–1076 (HVSEDMDDKS). The span at 1085 to 1103 (SGSVGRMSASSSTSSAGTV) shows a compositional bias: low complexity. The span at 1106–1116 (SKKRSKLCALL) shows a compositional bias: basic residues. Position 1113 is a cysteine methyl ester (Cys-1113). Cys-1113 carries S-farnesyl cysteine lipidation. A propeptide spans 1114 to 1116 (ALL) (removed in mature form).

This sequence belongs to the cyclic nucleotide phosphodiesterase family. As to quaternary structure, interacts with PrBP. A divalent metal cation is required as a cofactor.

The protein localises to the cell membrane. The catalysed reaction is 3',5'-cyclic GMP + H2O = GMP + H(+). Its function is as follows. Has a role regulating cGMP transport in Malpighian tubule principal cells. The polypeptide is cGMP-specific 3',5'-cyclic phosphodiesterase (Drosophila mojavensis (Fruit fly)).